Consider the following 535-residue polypeptide: uncharacterized protein (535 aa).

WD repeat units follow at residues 189–226, 228–267, 269–314, 320–359, 362–404, and 462–505; these read RDDFYTSLLSWSPKGDLAIGLAENIYLWSKELGPTRVL, ESIYDVSSVAYSYNGDILAVGRVDGTLQFWQDNERVPRIS, HHPG…AVLV, AHDEQVCGLTWNHDGSQFASGGNDNRVCLFKGSDLRQPLY, QQNA…KIDE, and VHSV…SWHN.

It belongs to the WD repeat CDC20/Fizzy family.

This is an uncharacterized protein from Schizosaccharomyces pombe (strain 972 / ATCC 24843) (Fission yeast).